The sequence spans 271 residues: 5-deoxy-glucuronate isomerase (271 aa).

This sequence belongs to the isomerase IolB family.

The catalysed reaction is 5-deoxy-D-glucuronate = 5-dehydro-2-deoxy-D-gluconate. It functions in the pathway polyol metabolism; myo-inositol degradation into acetyl-CoA; acetyl-CoA from myo-inositol: step 4/7. Functionally, involved in the isomerization of 5-deoxy-glucuronate (5DG) to 5-dehydro-2-deoxy-D-gluconate (DKG or 2-deoxy-5-keto-D-gluconate). In Bacillus subtilis subsp. natto, this protein is 5-deoxy-glucuronate isomerase.